A 193-amino-acid chain; its full sequence is Mediator of RNA polymerase II transcription subunit 11 (193 aa).

Positions 31–68 (AREIMQDLGKEKQISKNKMDDNANSFKKLITQVENELS) form a coiled coil. The tract at residues 115 to 193 (IEPPTQEVDE…EEEEGEQMEN (79 aa)) is disordered. The segment covering 121–143 (EVDEDNEDEEDSGDADMLEETPE) has biased composition (acidic residues). Residues 150-175 (TTSSSATTSDGGSGGADDAASSSAPR) are compositionally biased toward low complexity. Acidic residues predominate over residues 184-193 (EEEEGEQMEN).

It belongs to the Mediator complex subunit 11 family. In terms of assembly, component of the Mediator complex.

The protein resides in the nucleus. Functionally, component of the Mediator complex, a coactivator involved in the regulated transcription of nearly all RNA polymerase II-dependent genes. Mediator functions as a bridge to convey information from gene-specific regulatory proteins to the basal RNA polymerase II transcription machinery. Mediator is recruited to promoters by direct interactions with regulatory proteins and serves as a scaffold for the assembly of a functional pre-initiation complex with RNA polymerase II and the general transcription factors. This chain is Mediator of RNA polymerase II transcription subunit 11 (mdt-11), found in Caenorhabditis briggsae.